Reading from the N-terminus, the 330-residue chain is DNA-directed RNA polymerase subunit alpha (330 aa).

Residues M1–N225 form an alpha N-terminal domain (alpha-NTD) region. Residues V237–A330 form an alpha C-terminal domain (alpha-CTD) region.

The protein belongs to the RNA polymerase alpha chain family. In terms of assembly, homodimer. The RNAP catalytic core consists of 2 alpha, 1 beta, 1 beta' and 1 omega subunit. When a sigma factor is associated with the core the holoenzyme is formed, which can initiate transcription.

The catalysed reaction is RNA(n) + a ribonucleoside 5'-triphosphate = RNA(n+1) + diphosphate. In terms of biological role, DNA-dependent RNA polymerase catalyzes the transcription of DNA into RNA using the four ribonucleoside triphosphates as substrates. In Dehalococcoides mccartyi (strain ATCC BAA-2266 / KCTC 15142 / 195) (Dehalococcoides ethenogenes (strain 195)), this protein is DNA-directed RNA polymerase subunit alpha.